We begin with the raw amino-acid sequence, 355 residues long: MNAPFHQLADAILAGTPATPEDALAVLRADDAELMSVVAAAGRLRRAHFGNTVKVNYLVNLKSGLCPENCNYCSQALGSDAPILKYSWLSKDETLKQTGAGLRGGASRVCLVSSGRGPSTRDIDKVTEMVVALKEEYPGVEVCACLGLLKDGQAQRLKDAGVDAYNHNINTAESNHDNIVQTHTYADRVDTVEKAKGGGLSPCSGLIAGLGETDEQLVEALFALRELGSDSIPVNFLMPFDGTPFENTWELSPTRCVKILAMARFVCPDKEIRIAGGREMHLRSLQSIALQVANSVFLGDYLTSEGQDAKADLEMIRDNGFVVLGSEEDLAQQAREPIDPAIRQRGAGTDVVPNA.

The region spanning 51 to 275 is the Radical SAM core domain; it reads NTVKVNYLVN…VCPDKEIRIA (225 aa). Residues Cys66, Cys70, and Cys73 each coordinate [4Fe-4S] cluster. Residues Cys110, Cys143, Cys203, and Arg273 each coordinate [2Fe-2S] cluster.

It belongs to the radical SAM superfamily. Biotin synthase family. In terms of assembly, homodimer. It depends on [4Fe-4S] cluster as a cofactor. [2Fe-2S] cluster is required as a cofactor.

The catalysed reaction is (4R,5S)-dethiobiotin + (sulfur carrier)-SH + 2 reduced [2Fe-2S]-[ferredoxin] + 2 S-adenosyl-L-methionine = (sulfur carrier)-H + biotin + 2 5'-deoxyadenosine + 2 L-methionine + 2 oxidized [2Fe-2S]-[ferredoxin]. Its pathway is cofactor biosynthesis; biotin biosynthesis; biotin from 7,8-diaminononanoate: step 2/2. Its function is as follows. Catalyzes the conversion of dethiobiotin (DTB) to biotin by the insertion of a sulfur atom into dethiobiotin via a radical-based mechanism. The protein is Biotin synthase of Saccharopolyspora erythraea (strain ATCC 11635 / DSM 40517 / JCM 4748 / NBRC 13426 / NCIMB 8594 / NRRL 2338).